The chain runs to 1149 residues: ATP-dependent helicase/deoxyribonuclease subunit B (1149 aa).

The 276-residue stretch at 1-276 (MAIRYIFGRA…INLDIEERKV (276 aa)) folds into the UvrD-like helicase ATP-binding domain. 8 to 15 (GRAGRGKS) contacts ATP. The UvrD-like helicase C-terminal domain maps to 273–586 (ERKVLPKEKE…LVGSIERSKS (314 aa)). [4Fe-4S] cluster contacts are provided by C786, C1105, C1108, and C1114.

Belongs to the helicase family. AddB/RexB type 1 subfamily. Heterodimer of AddA and AddB. Mg(2+) is required as a cofactor. It depends on [4Fe-4S] cluster as a cofactor.

The heterodimer acts as both an ATP-dependent DNA helicase and an ATP-dependent, dual-direction single-stranded exonuclease. Recognizes the chi site generating a DNA molecule suitable for the initiation of homologous recombination. The AddB subunit has 5' -&gt; 3' nuclease activity but not helicase activity. The chain is ATP-dependent helicase/deoxyribonuclease subunit B from Alkaliphilus metalliredigens (strain QYMF).